Consider the following 105-residue polypeptide: Large ribosomal subunit protein uL24 (105 aa).

The protein belongs to the universal ribosomal protein uL24 family. In terms of assembly, part of the 50S ribosomal subunit.

Its function is as follows. One of two assembly initiator proteins, it binds directly to the 5'-end of the 23S rRNA, where it nucleates assembly of the 50S subunit. Functionally, one of the proteins that surrounds the polypeptide exit tunnel on the outside of the subunit. This chain is Large ribosomal subunit protein uL24, found in Acinetobacter baumannii (strain AB307-0294).